Here is a 303-residue protein sequence, read N- to C-terminus: Cyclin-dependent kinase 4 (303 aa).

Ala2 carries the post-translational modification N-acetylalanine. One can recognise a Protein kinase domain in the interval 6–295; sequence YEPVAEIGVG…AFRALQHSYL (290 aa). ATP-binding positions include 12-20 and Lys35; that span reads IGVGAYGTV. Residues 50–56 are required for binding D-type cyclins; it reads PVSTVRE. Asp140 functions as the Proton acceptor in the catalytic mechanism. At Thr172 the chain carries Phosphothreonine; by CAK. Ser300 bears the Phosphoserine mark.

Belongs to the protein kinase superfamily. CMGC Ser/Thr protein kinase family. CDC2/CDKX subfamily. Component of the D-CDK4 complex, composed of CDK4 and some D-type G1 cyclin (CCND1, CCND2 or CCND3). Interacts directly in the complex with CCND1, CCND2 or CCND3. Interacts with ZNF655. Forms a ternary complex, cyclin D-CDK4-CDKN1B, involved in modulating CDK4 enzymatic activity. Interacts directly with CDKN1B (phosphorylated on 'Tyr-88' and 'Tyr-89'); the interaction allows assembly of the cyclin D-CDK4 complex, Thr-172 phosphorylation, nuclear translocation and enhances the cyclin D-CDK4 complex activity. CDK4 activity is either inhibited or enhanced depending on stoichiometry of complex. The non-tyrosine-phosphorylated form of CDKN1B prevents T-loop phosphorylation of CDK4 producing inactive CDK4. Interacts (unphosphorylated form) with CDK2. Also forms ternary complexes with CDKN1A or CDKN2A. Interacts directly with CDKN1A (via its N-terminal); the interaction promotes the assembly of the cyclin D-CDK4 complex, its nuclear translocation and promotes the cyclin D-dependent enzyme activity of CDK4. Interacts with CCND1; the interaction is prevented with the binding of CCND1 to INSM1 during cell cycle progression. Interacts with SEI1 and CCND1. Probably forms a complex composed of chaperones HSP90 and HSP70, co-chaperones CDC37, PPP5C, TSC1 and client protein TSC2, CDK4, AKT, RAF1 and NR3C1; this complex does not contain co-chaperones STIP1/HOP and PTGES3/p23. Interacts with CEBPA (when phosphorylated). Interacts with FNIP1 and FNIP2. Post-translationally, phosphorylation at Thr-172 is required for enzymatic activity. Phosphorylated, in vitro, at this site by CCNH-CDK7, but, in vivo, appears to be phosphorylated by a proline-directed kinase. In the cyclin D-CDK4-CDKN1B complex, this phosphorylation and consequent CDK4 enzyme activity, is dependent on the tyrosine phosphorylation state of CDKN1B. Thus, in proliferating cells, CDK4 within the complex is phosphorylated on Thr-172 in the T-loop. In resting cells, phosphorylation on Thr-172 is prevented by the non-tyrosine-phosphorylated form of CDKN1B.

The protein resides in the cytoplasm. It localises to the nucleus. The protein localises to the nucleus membrane. The catalysed reaction is L-seryl-[protein] + ATP = O-phospho-L-seryl-[protein] + ADP + H(+). The enzyme catalyses L-threonyl-[protein] + ATP = O-phospho-L-threonyl-[protein] + ADP + H(+). With respect to regulation, both phosphorylation at Thr-172 and binding of a D-type cyclin are necessary for enzymatic activity. Full activation of the cyclin-D-CDK4 complex appears to require other factors such as recruitment of the substrate via a substrate recruitment motif, and/or formation of the CDKN1B ternary complex. Inhibited by INK4 family members. In resting cells, the non-tyrosine-phosphorylated form of CDKN1B prevents phosphorylation at Thr-172 and inactivation, while, in proliferating cells, tyrosine phosphorylation of CDKN1B allows phosphorylation of Thr-172 of CDK4 and subsequent activation. Its function is as follows. Ser/Thr-kinase component of cyclin D-CDK4 (DC) complexes that phosphorylate and inhibit members of the retinoblastoma (RB) protein family including RB1 and regulate the cell-cycle during G(1)/S transition. Phosphorylation of RB1 allows dissociation of the transcription factor E2F from the RB/E2F complexes and the subsequent transcription of E2F target genes which are responsible for the progression through the G(1) phase. Hypophosphorylates RB1 in early G(1) phase. Cyclin D-CDK4 complexes are major integrators of various mitogenenic and antimitogenic signals. Also phosphorylates SMAD3 in a cell-cycle-dependent manner and represses its transcriptional activity. Component of the ternary complex, cyclin D/CDK4/CDKN1B, required for nuclear translocation and activity of the cyclin D-CDK4 complex. The sequence is that of Cyclin-dependent kinase 4 (Cdk4) from Mus musculus (Mouse).